Consider the following 201-residue polypeptide: Holliday junction branch migration complex subunit RuvA (201 aa).

The domain I stretch occupies residues 1–64; sequence MIGRLHGKII…EDAHLLFGFA (64 aa). The segment at 65–143 is domain II; it reads QKQDRTLFRE…GVAQSDFFEE (79 aa). A flexible linker region spans residues 144–154; that stretch reads HSVETIVATHS. The segment at 154–201 is domain III; sequence SHDPADEARDALVALGYKLADAEKMIKKVNKAGATSEQLIREALKASL.

This sequence belongs to the RuvA family. Homotetramer. Forms an RuvA(8)-RuvB(12)-Holliday junction (HJ) complex. HJ DNA is sandwiched between 2 RuvA tetramers; dsDNA enters through RuvA and exits via RuvB. An RuvB hexamer assembles on each DNA strand where it exits the tetramer. Each RuvB hexamer is contacted by two RuvA subunits (via domain III) on 2 adjacent RuvB subunits; this complex drives branch migration. In the full resolvosome a probable DNA-RuvA(4)-RuvB(12)-RuvC(2) complex forms which resolves the HJ.

The protein resides in the cytoplasm. Its function is as follows. The RuvA-RuvB-RuvC complex processes Holliday junction (HJ) DNA during genetic recombination and DNA repair, while the RuvA-RuvB complex plays an important role in the rescue of blocked DNA replication forks via replication fork reversal (RFR). RuvA specifically binds to HJ cruciform DNA, conferring on it an open structure. The RuvB hexamer acts as an ATP-dependent pump, pulling dsDNA into and through the RuvAB complex. HJ branch migration allows RuvC to scan DNA until it finds its consensus sequence, where it cleaves and resolves the cruciform DNA. In Actinobacillus pleuropneumoniae serotype 5b (strain L20), this protein is Holliday junction branch migration complex subunit RuvA.